The primary structure comprises 58 residues: Large ribosomal subunit protein bL32 (58 aa).

Residues 1–23 form a disordered region; that stretch reads MAVPARHTSSAKKNRRRTHYKLT. Over residues 9–20 the composition is skewed to basic residues; that stretch reads SSAKKNRRRTHY.

Belongs to the bacterial ribosomal protein bL32 family.

The polypeptide is Large ribosomal subunit protein bL32 (rpmF) (Lactococcus lactis subsp. cremoris (Streptococcus cremoris)).